We begin with the raw amino-acid sequence, 90 residues long: Lantipeptide prochlorosin 1.7 (90 aa).

The propeptide occupies 1–68 (MSEEQLKAFI…DAELEGVAGG (68 aa)). 2,3-didehydrobutyrine occurs at positions 69 and 73. The segment at residues 76 to 79 (SITC) is a cross-link (lanthionine (Ser-Cys)). 2 consecutive cross-links (beta-methyllanthionine (Thr-Cys)) follow at residues 78–82 (TCETC) and 81–90 (TCDLLVGKMC).

In terms of processing, cross-links are proved in vitro, when coepressed in E.coli with the ProcM lanthionine synthetase. Post-translationally, the lanthionine residue has a DL configuration (with 2S,6R stereochemistry), whereas the beta-methyllanthionine residues have a DL configuration (with 2S,3S,6R stereochemistry). Maturation of prochlorosin involves the enzymatic conversion of Thr, and Ser into dehydrated AA and the formation of thioether bonds with cysteines. This is followed by membrane translocation and cleavage of the modified precursor.

It is found in the secreted. In terms of biological role, lanthionine-containing peptide (lantipeptide) with unknown function. Does not show antibiotic activity against Lactococcus lactis 117 and Bacillus subtilis 6633 bacteria. Organisms that produce this peptide live in oligotrophic environments at very dilute concentrations, suggesting this peptide is not secreted to influence other bacteria. This is Lantipeptide prochlorosin 1.7 from Prochlorococcus marinus (strain MIT 9313).